Reading from the N-terminus, the 263-residue chain is Putative cysteine-rich repeat secretory protein 31 (263 aa).

Positions 1 to 32 (MHNSYSLSKRLVLVLFLAVVATQLFLIRNVSS) are cleaved as a signal peptide. 2 Gnk2-homologous domains span residues 39-141 (YLHH…AIEV) and 146-260 (YDNN…FYPF).

This sequence belongs to the cysteine-rich repeat secretory protein family.

It is found in the secreted. The sequence is that of Putative cysteine-rich repeat secretory protein 31 (CRRSP31) from Arabidopsis thaliana (Mouse-ear cress).